Here is a 386-residue protein sequence, read N- to C-terminus: Succinate--CoA ligase [ADP-forming] subunit beta (386 aa).

ATP-binding residues include Lys46, Glu99, Ala102, and Glu107. Mg(2+) is bound by residues Asn199 and Asp213. Substrate contacts are provided by residues Asn264 and Gly321–Met323.

This sequence belongs to the succinate/malate CoA ligase beta subunit family. As to quaternary structure, heterotetramer of two alpha and two beta subunits. It depends on Mg(2+) as a cofactor.

The catalysed reaction is succinate + ATP + CoA = succinyl-CoA + ADP + phosphate. It catalyses the reaction GTP + succinate + CoA = succinyl-CoA + GDP + phosphate. It participates in carbohydrate metabolism; tricarboxylic acid cycle; succinate from succinyl-CoA (ligase route): step 1/1. Succinyl-CoA synthetase functions in the citric acid cycle (TCA), coupling the hydrolysis of succinyl-CoA to the synthesis of either ATP or GTP and thus represents the only step of substrate-level phosphorylation in the TCA. The beta subunit provides nucleotide specificity of the enzyme and binds the substrate succinate, while the binding sites for coenzyme A and phosphate are found in the alpha subunit. This is Succinate--CoA ligase [ADP-forming] subunit beta from Orientia tsutsugamushi (strain Ikeda) (Rickettsia tsutsugamushi).